Reading from the N-terminus, the 211-residue chain is Thiamine-phosphate synthase (211 aa).

4-amino-2-methyl-5-(diphosphooxymethyl)pyrimidine-binding positions include 37 to 41 (QLRIK) and asparagine 69. 2 residues coordinate Mg(2+): aspartate 70 and aspartate 89. Serine 108 is a binding site for 4-amino-2-methyl-5-(diphosphooxymethyl)pyrimidine. 134–136 (TQT) contacts 2-[(2R,5Z)-2-carboxy-4-methylthiazol-5(2H)-ylidene]ethyl phosphate. Lysine 137 is a binding site for 4-amino-2-methyl-5-(diphosphooxymethyl)pyrimidine. Residues glycine 166 and 186–187 (VS) each bind 2-[(2R,5Z)-2-carboxy-4-methylthiazol-5(2H)-ylidene]ethyl phosphate.

This sequence belongs to the thiamine-phosphate synthase family. It depends on Mg(2+) as a cofactor.

The enzyme catalyses 2-[(2R,5Z)-2-carboxy-4-methylthiazol-5(2H)-ylidene]ethyl phosphate + 4-amino-2-methyl-5-(diphosphooxymethyl)pyrimidine + 2 H(+) = thiamine phosphate + CO2 + diphosphate. The catalysed reaction is 2-(2-carboxy-4-methylthiazol-5-yl)ethyl phosphate + 4-amino-2-methyl-5-(diphosphooxymethyl)pyrimidine + 2 H(+) = thiamine phosphate + CO2 + diphosphate. It carries out the reaction 4-methyl-5-(2-phosphooxyethyl)-thiazole + 4-amino-2-methyl-5-(diphosphooxymethyl)pyrimidine + H(+) = thiamine phosphate + diphosphate. The protein operates within cofactor biosynthesis; thiamine diphosphate biosynthesis; thiamine phosphate from 4-amino-2-methyl-5-diphosphomethylpyrimidine and 4-methyl-5-(2-phosphoethyl)-thiazole: step 1/1. Functionally, condenses 4-methyl-5-(beta-hydroxyethyl)thiazole monophosphate (THZ-P) and 2-methyl-4-amino-5-hydroxymethyl pyrimidine pyrophosphate (HMP-PP) to form thiamine monophosphate (TMP). The protein is Thiamine-phosphate synthase of Escherichia coli O157:H7.